Here is a 186-residue protein sequence, read N- to C-terminus: Imidazoleglycerol-phosphate dehydratase (186 aa).

This sequence belongs to the imidazoleglycerol-phosphate dehydratase family.

It is found in the cytoplasm. The catalysed reaction is D-erythro-1-(imidazol-4-yl)glycerol 3-phosphate = 3-(imidazol-4-yl)-2-oxopropyl phosphate + H2O. It participates in amino-acid biosynthesis; L-histidine biosynthesis; L-histidine from 5-phospho-alpha-D-ribose 1-diphosphate: step 6/9. This is Imidazoleglycerol-phosphate dehydratase from Pyrobaculum aerophilum (strain ATCC 51768 / DSM 7523 / JCM 9630 / CIP 104966 / NBRC 100827 / IM2).